Reading from the N-terminus, the 261-residue chain is MLICNDKFNPKTLLEEIMALRPWRKGPFKISQIKIDSEWDSSIKWDLVKNATPLKDKIVADVGCNNGYYLFKMLEYKPKSLVGFDPGVLVKKQFEFLAPFFDKEKKIIYESLGVEDLHEKYPNAFDVIFCLGVLYHRKSPLEALKALYHALKIKGELVLDTLIIDSPLDIALCPKKTYAKMKNVYFIPSVSVLKGWCERVGFENFEILSVLKTTPKEQRKTDFILGQSLEDFLDKTDPSKTLEGYDAPLRGYFKMLKPSKR.

Carboxy-S-adenosyl-L-methionine is bound by residues Lys-25, Trp-39, Lys-44, Gly-63, 114–115 (VE), Tyr-135, and Arg-250.

The protein belongs to the class I-like SAM-binding methyltransferase superfamily. CmoB family. As to quaternary structure, homotetramer.

The enzyme catalyses carboxy-S-adenosyl-L-methionine + 5-hydroxyuridine(34) in tRNA = 5-carboxymethoxyuridine(34) in tRNA + S-adenosyl-L-homocysteine + H(+). In terms of biological role, catalyzes carboxymethyl transfer from carboxy-S-adenosyl-L-methionine (Cx-SAM) to 5-hydroxyuridine (ho5U) to form 5-carboxymethoxyuridine (cmo5U) at position 34 in tRNAs. This Helicobacter pylori (strain P12) protein is tRNA U34 carboxymethyltransferase.